The primary structure comprises 380 residues: MKAWLQSSISYYTGTAEPVYGPEAIQPVTASVQGINPFHRLEADDFKWSTPSSSHVETQVFYIKPNEGDYMCFVQLIHSNLGSWTTTAQSTCRIFDLKHPENDLWTSTNMDQFSFENDKTSFVAKNCSVVLEDQKRYRIRASINMDSIIDITVHQDAPPFKIGEDGNSTYGTDPSKPWASMKHTFWPRTRVEGSIVARGRVVDVTGPGMFVHALQNGKPHHLASSWEFALLQHKKFTAIMMQFKTPPSYGSTIVNIGGIAMKDKIISATVDNTIEHVETTLDPDTEWHEPTRISYEWDGKDAETYTEDIHLSVDAPLGRRLQRIDVLAEIPSWLKGFVHGVSGTKPFIYQYFSPVKFTLKMGDEVIEDEATLFNETTFIS.

The segment at 1–18 (MKAWLQSSISYYTGTAEP) is peripherally associates with membranes.

This sequence belongs to the SVF1 family.

The protein localises to the golgi apparatus. It localises to the cis-Golgi network membrane. The protein resides in the endoplasmic reticulum membrane. It is found in the cytoplasm. Its subcellular location is the nucleus. Its function is as follows. Ceramide-binding protein that may transfer ceramides from the endoplasmic reticulum membrane to the cis-Golgi network membrane, and is thereby required for the biosynthesis of complex sphingolipids. In Schizosaccharomyces pombe (strain 972 / ATCC 24843) (Fission yeast), this protein is Ceramide-binding protein svf1.